The sequence spans 314 residues: Ribosomal protein L11 methyltransferase (314 aa).

Thr166, Gly187, Asp209, and Asn251 together coordinate S-adenosyl-L-methionine.

This sequence belongs to the methyltransferase superfamily. PrmA family.

The protein localises to the cytoplasm. The catalysed reaction is L-lysyl-[protein] + 3 S-adenosyl-L-methionine = N(6),N(6),N(6)-trimethyl-L-lysyl-[protein] + 3 S-adenosyl-L-homocysteine + 3 H(+). Functionally, methylates ribosomal protein L11. The sequence is that of Ribosomal protein L11 methyltransferase from Clostridium tetani (strain Massachusetts / E88).